The sequence spans 331 residues: Olfactory receptor 6B3 (331 aa).

Over 1 to 25 (MSGENVTRVGTFILVGFPTAPGLQY) the chain is Extracellular. The N-linked (GlcNAc...) asparagine glycan is linked to N5. A helical membrane pass occupies residues 26–46 (LLFLLFLLTYLFVLVENLAII). Over 47–54 (LTVWSSTS) the chain is Cytoplasmic. The helical transmembrane segment at 55–75 (LHRPMYYFLSSMSFLEIWYVS) threads the bilayer. Residues 76–99 (DITPKMLEGFLLQQKRISFVGCMT) are Extracellular-facing. The cysteines at positions 97 and 189 are disulfide-linked. A helical transmembrane segment spans residues 100–120 (QLYFFSSLVCTECVLLASMAY). Over 121 to 139 (DRYVAICHPLRYHVLVTPG) the chain is Cytoplasmic. A helical transmembrane segment spans residues 140 to 160 (LCLQLVGFSFVSGFTISMIKV). Residues 161–196 (CFISSVTFCGSNVLNHFFCDISPILKLACTDFSTAE) lie on the Extracellular side of the membrane. A helical transmembrane segment spans residues 197 to 217 (LVDFILAFIILVFPLLATMLS). The Cytoplasmic portion of the chain corresponds to 218 to 237 (YAHITLAVLRIPSATGCWRA). A helical membrane pass occupies residues 238–258 (FFTCASHLTVVTVFYTALLFM). At 259–271 (YVRPQAIDSRSSN) the chain is on the extracellular side. A helical transmembrane segment spans residues 272-292 (KLISVLYTVITPILNPLIYCL). At 293 to 331 (RNKEFKNALKKAFGLTSCAVEGRLSSLLELHLQIHSQPL) the chain is on the cytoplasmic side.

Belongs to the G-protein coupled receptor 1 family.

The protein resides in the cell membrane. Odorant receptor. This chain is Olfactory receptor 6B3 (OR6B3), found in Homo sapiens (Human).